The chain runs to 137 residues: Endoribonuclease YbeY (137 aa).

Zn(2+) is bound by residues His-107, His-111, and Asp-117.

Belongs to the endoribonuclease YbeY family. Zn(2+) is required as a cofactor.

The protein resides in the cytoplasm. Functionally, single strand-specific metallo-endoribonuclease involved in late-stage 70S ribosome quality control and in maturation of the 3' terminus of the 16S rRNA. The protein is Endoribonuclease YbeY of Bacteroides thetaiotaomicron (strain ATCC 29148 / DSM 2079 / JCM 5827 / CCUG 10774 / NCTC 10582 / VPI-5482 / E50).